Here is a 491-residue protein sequence, read N- to C-terminus: Cobyric acid synthase (491 aa).

A GATase cobBQ-type domain is found at glutamate 250 to tryptophan 439. Cysteine 331 serves as the catalytic Nucleophile. Histidine 431 is a catalytic residue.

This sequence belongs to the CobB/CobQ family. CobQ subfamily.

It participates in cofactor biosynthesis; adenosylcobalamin biosynthesis. Catalyzes amidations at positions B, D, E, and G on adenosylcobyrinic A,C-diamide. NH(2) groups are provided by glutamine, and one molecule of ATP is hydrogenolyzed for each amidation. This is Cobyric acid synthase from Synechococcus sp. (strain ATCC 27144 / PCC 6301 / SAUG 1402/1) (Anacystis nidulans).